Reading from the N-terminus, the 123-residue chain is MALTNEEILNAVAEKTVLELVELISAFEEKFNVSAAAVAVAAPAGGAAAAAEEQSEFNVELTSFGANKVAVIKAVREATGLGLKEAKDLVEGAPQVLKEGVSKEEGEELKKKLEEAGATVTLK.

Belongs to the bacterial ribosomal protein bL12 family. Homodimer. Part of the ribosomal stalk of the 50S ribosomal subunit. Forms a multimeric L10(L12)X complex, where L10 forms an elongated spine to which 2 to 4 L12 dimers bind in a sequential fashion. Binds GTP-bound translation factors.

Functionally, forms part of the ribosomal stalk which helps the ribosome interact with GTP-bound translation factors. Is thus essential for accurate translation. The polypeptide is Large ribosomal subunit protein bL12 (Acinetobacter baumannii (strain AB307-0294)).